Consider the following 282-residue polypeptide: Ammonia transport outward protein 2 (282 aa).

Residues 1-34 form a disordered region; that stretch reads MSDREQSSGNTAFENPKALDSSEGEFISENNDQS. Residue Ser2 is modified to N-acetylserine. A phosphoserine mark is found at Ser2, Ser7, Ser21, Ser22, Ser28, and Ser40. The Extracellular portion of the chain corresponds to 2-86; that stretch reads SDREQSSGNT…GLAPAPVHKF (85 aa). The helical transmembrane segment at 87–107 threads the bilayer; it reads ANPAPLGLSGFALTTFVLSMF. Residues 108–119 lie on the Cytoplasmic side of the membrane; the sequence is NARAQGITIPNV. Residues 120–140 form a helical membrane-spanning segment; that stretch reads VVGCAMFYGGLVQLIAGIWEI. Topologically, residues 141-150 are extracellular; sequence ALENTFGGTA. The helical transmembrane segment at 151 to 171 threads the bilayer; it reads LCSFGGFWLSFGAIYIPWFGI. At 172-184 the chain is on the cytoplasmic side; sequence LDAYKDKESDLGN. The helical transmembrane segment at 185 to 205 threads the bilayer; it reads ALGFYLLGWALFTFGLSVCTM. At 206–207 the chain is on the extracellular side; the sequence is KS. Residues 208–228 form a helical membrane-spanning segment; that stretch reads TIMFFALFFLLAVTFLLLSIA. The Cytoplasmic portion of the chain corresponds to 229 to 238; the sequence is NFTGEVGVTR. Residues 239–259 traverse the membrane as a helical segment; it reads AGGVLGVIVAFIAWYNAYAGI. At 260–282 the chain is on the extracellular side; it reads ATRQNSYIMVHPFALPSNDKVFF.

The protein belongs to the acetate uptake transporter (AceTr) (TC 2.A.96) family.

It is found in the cell membrane. Transporter protein required for ammonia export. Involved in acetate resistance. The polypeptide is Ammonia transport outward protein 2 (ATO2) (Saccharomyces cerevisiae (strain ATCC 204508 / S288c) (Baker's yeast)).